A 745-amino-acid chain; its full sequence is uncharacterized protein (745 aa).

An HTH araC/xylS-type domain is found at 158 to 256 (NQVCDYIELH…HQTPKQYRGD (99 aa)). DNA-binding regions (H-T-H motif) lie at residues 175 to 196 (SELSEYVGWSESHLSKKFTESL) and 223 to 246 (ITDIALQNGFSSAASFARTFKHFT).

This is an uncharacterized protein from Staphylococcus aureus (strain Mu50 / ATCC 700699).